Here is a 206-residue protein sequence, read N- to C-terminus: Small ribosomal subunit protein uS4 (206 aa).

An S4 RNA-binding domain is found at 98–164 (MRLDNVVYRL…EKFKTFIENP (67 aa)).

It belongs to the universal ribosomal protein uS4 family. Part of the 30S ribosomal subunit. Contacts protein S5. The interaction surface between S4 and S5 is involved in control of translational fidelity.

In terms of biological role, one of the primary rRNA binding proteins, it binds directly to 16S rRNA where it nucleates assembly of the body of the 30S subunit. Its function is as follows. With S5 and S12 plays an important role in translational accuracy. This Clostridium tetani (strain Massachusetts / E88) protein is Small ribosomal subunit protein uS4.